We begin with the raw amino-acid sequence, 270 residues long: Meiotic recombination 1 protein (270 aa).

Positions 191–225 (EIKLNKTQITFLIGAKGTRIESLREKSGASIKIIP) constitute a KH domain.

Functionally, required for chromosome pairing and genetic recombination. MER1 may function to bring the axial elements of the synaptonemal complex corresponding to homologous chromosomes together by initiating recombination. MER1 might be responsible for regulating the MER2 gene and/or gene product. The chain is Meiotic recombination 1 protein (MER1) from Saccharomyces cerevisiae (strain ATCC 204508 / S288c) (Baker's yeast).